The sequence spans 502 residues: Sulfate adenylyltransferase (502 aa).

Positions 1–167 (MPSPHGGVLQ…LEAIQLPVHY (167 aa)) are N-terminal. Residues 168–393 (DYPGWRKTPA…LRESNPSRPK (226 aa)) are catalytic. Position 195 (Q195) interacts with sulfate. Residues 195 to 198 (QTRN) and 289 to 292 (GRDH) each bind ATP. Residues T196, R197, and N198 contribute to the active site. R197 provides a ligand contact to sulfate. Residue A293 participates in sulfate binding. V331 is an ATP binding site. Residues 394 to 502 (QGFALVLSET…FLEDQGFFQF (109 aa)) are required for oligomerization; adenylyl-sulfate kinase-like.

It belongs to the sulfate adenylyltransferase family. Homohexamer. Dimer of trimers.

It is found in the cytoplasm. The catalysed reaction is sulfate + ATP + H(+) = adenosine 5'-phosphosulfate + diphosphate. It participates in sulfur metabolism; hydrogen sulfide biosynthesis; sulfite from sulfate: step 1/3. Catalyzes the first intracellular reaction of sulfate assimilation, forming adenosine-5'-phosphosulfate (APS) from inorganic sulfate and ATP. Plays an important role in sulfate activation as a component of the biosynthesis pathway of sulfur-containing amino acids. The chain is Sulfate adenylyltransferase from Kluyveromyces lactis (strain ATCC 8585 / CBS 2359 / DSM 70799 / NBRC 1267 / NRRL Y-1140 / WM37) (Yeast).